Consider the following 2581-residue polypeptide: Chromodomain-helicase-DNA-binding protein 8 (2581 aa).

Disordered stretches follow at residues aspartate 22–threonine 114, valine 253–glutamine 281, and glutamine 349–leucine 375. 2 stretches are compositionally biased toward polar residues: residues serine 42–serine 64 and aspartate 94–threonine 114. The span at glycine 255–proline 267 shows a compositional bias: low complexity. Residues proline 355–alanine 370 are compositionally biased toward pro residues. The residue at position 432 (serine 432) is a Phosphoserine. 2 disordered regions span residues arginine 473–lysine 584 and aspartate 596–glutamate 616. Over residues arginine 493–proline 516 the composition is skewed to basic and acidic residues. Serine 553 and serine 562 each carry phosphoserine. Positions glutamine 572 to lysine 584 are enriched in basic residues. Lysine 609 is covalently cross-linked (Glycyl lysine isopeptide (Lys-Gly) (interchain with G-Cter in SUMO)). Chromo domains are found at residues alanine 642–arginine 709 and valine 724–arginine 790. A Helicase ATP-binding domain is found at leucine 823–serine 997. Aspartate 836–threonine 843 contacts ATP. The short motif at aspartate 948–histidine 951 is the DEAH box element. Positions leucine 1137–arginine 1288 constitute a Helicase C-terminal domain. Serine 1420 and serine 1424 each carry phosphoserine. A disordered region spans residues glutamate 1692–leucine 1713. The interaction with FAM124B stretch occupies residues isoleucine 1789–glutamate 2302. A phosphoserine mark is found at serine 1976 and serine 1978. The segment at glutamine 1988–valine 2016 is disordered. Residue threonine 1993 is modified to Phosphothreonine. Serine 1995, serine 1997, and serine 2008 each carry phosphoserine. A Glycyl lysine isopeptide (Lys-Gly) (interchain with G-Cter in SUMO2) cross-link involves residue lysine 2025. 2 disordered regions span residues serine 2047–glutamate 2118 and asparagine 2179–alanine 2221. The segment covering glutamate 2063–leucine 2072 has biased composition (acidic residues). Phosphoserine occurs at positions 2068 and 2070. The span at serine 2075–serine 2094 shows a compositional bias: low complexity. Residues glutamate 2102 to aspartate 2116 show a composition bias toward basic and acidic residues. Residues serine 2182, serine 2200, and serine 2202 each carry the phosphoserine modification. Position 2204 is a phosphothreonine (threonine 2204). Serine 2211 is modified (phosphoserine). Position 2215 is a phosphothreonine (threonine 2215). Serine 2223 is modified (phosphoserine). A Glycyl lysine isopeptide (Lys-Gly) (interchain with G-Cter in SUMO2) cross-link involves residue lysine 2256. Positions proline 2484–aspartate 2581 are disordered. Residues leucine 2492–glycine 2510 are compositionally biased toward basic residues. Residues threonine 2513 to alanine 2528 show a composition bias toward low complexity. A Phosphoserine modification is found at serine 2519. Over residues glutamate 2537–leucine 2550 the composition is skewed to acidic residues. The segment covering aspartate 2565–aspartate 2574 has biased composition (low complexity).

The protein belongs to the SNF2/RAD54 helicase family. CHD8 subfamily. Interacts with p53/TP53, histone H1 and CTCF. Component of some MLL1/MLL complex, at least composed of the core components KMT2A/MLL1, ASH2L, HCFC1/HCF1, WDR5 and RBBP5, as well as the facultative components BACC1, CHD8, E2F6, HSP70, INO80C, KANSL1, LAS1L, MAX, MCRS1, MGA, KAT8/MOF, PELP1, PHF20, PRP31, RING2, RUVB1/TIP49A, RUVB2/TIP49B, SENP3, TAF1, TAF4, TAF6, TAF7, TAF9 and TEX10. Interacts with CHD7. Interacts with FAM124B. Interacts with CTNNB1. Interacts with PIAS3. Interacts with TLK2. Interacts with HNRNPL in an RNA-dependent manner. In terms of processing, sumoylated.

The protein localises to the nucleus. The enzyme catalyses ATP + H2O = ADP + phosphate + H(+). Functionally, ATP-dependent chromatin-remodeling factor, it slides nucleosomes along DNA; nucleosome sliding requires ATP. Acts as a transcription repressor by remodeling chromatin structure and recruiting histone H1 to target genes. Suppresses p53/TP53-mediated apoptosis by recruiting histone H1 and preventing p53/TP53 transactivation activity. Acts as a negative regulator of Wnt signaling pathway by regulating beta-catenin (CTNNB1) activity. Negatively regulates CTNNB1-targeted gene expression by being recruited specifically to the promoter regions of several CTNNB1 responsive genes. Involved in both enhancer blocking and epigenetic remodeling at chromatin boundary via its interaction with CTCF. Acts as a suppressor of STAT3 activity by suppressing the LIF-induced STAT3 transcriptional activity. Also acts as a transcription activator via its interaction with ZNF143 by participating in efficient U6 RNA polymerase III transcription. Regulates alternative splicing of a core group of genes involved in neuronal differentiation, cell cycle and DNA repair. Enables H3K36me3-coupled transcription elongation and co-transcriptional RNA processing likely via interaction with HNRNPL. The polypeptide is Chromodomain-helicase-DNA-binding protein 8 (Rattus norvegicus (Rat)).